The sequence spans 767 residues: 5-methyltetrahydropteroyltriglutamate--homocysteine methyltransferase (767 aa).

Residues K19 and N126 each coordinate 5-methyltetrahydropteroyltri-L-glutamate. L-homocysteine contacts are provided by residues 446–448 and E499; that span reads IGS. L-methionine-binding positions include 446 to 448 and E499; that span reads IGS. 5-methyltetrahydropteroyltri-L-glutamate contacts are provided by residues D504, Y527, 530 to 531, and W576; that span reads RY. D614 is an L-homocysteine binding site. L-methionine is bound at residue D614. Zn(2+)-binding residues include H657, C659, and E679. H707 functions as the Proton donor in the catalytic mechanism. A Zn(2+)-binding site is contributed by C739.

The protein belongs to the vitamin-B12 independent methionine synthase family. Requires Zn(2+) as cofactor.

The catalysed reaction is 5-methyltetrahydropteroyltri-L-glutamate + L-homocysteine = tetrahydropteroyltri-L-glutamate + L-methionine. It participates in amino-acid biosynthesis; L-methionine biosynthesis via de novo pathway; L-methionine from L-homocysteine (MetE route): step 1/1. With respect to regulation, inhibited weakly by methotrexate. Catalyzes the transfer of a methyl group from 5-methyltetrahydrofolate to homocysteine resulting in methionine formation. The chain is 5-methyltetrahydropteroyltriglutamate--homocysteine methyltransferase from Candida albicans (strain SC5314 / ATCC MYA-2876) (Yeast).